Consider the following 305-residue polypeptide: Elongation factor Ts, mitochondrial (305 aa).

It belongs to the EF-Ts family.

It is found in the mitochondrion. Its function is as follows. Associates with the EF-Tu.GDP complex and induces the exchange of GDP to GTP. It remains bound to the aminoacyl-tRNA.EF-Tu.GTP complex up to the GTP hydrolysis stage on the ribosome. The chain is Elongation factor Ts, mitochondrial (tsfm) from Danio rerio (Zebrafish).